Reading from the N-terminus, the 441-residue chain is Glutamyl-tRNA reductase (441 aa).

Residues 49-52 (TCNR), Ser110, 115-117 (EPQ), and Gln121 contribute to the substrate site. The active-site Nucleophile is the Cys50. 190–195 (GAGEMA) lines the NADP(+) pocket.

It belongs to the glutamyl-tRNA reductase family. In terms of assembly, homodimer.

It catalyses the reaction (S)-4-amino-5-oxopentanoate + tRNA(Glu) + NADP(+) = L-glutamyl-tRNA(Glu) + NADPH + H(+). The protein operates within porphyrin-containing compound metabolism; protoporphyrin-IX biosynthesis; 5-aminolevulinate from L-glutamyl-tRNA(Glu): step 1/2. In terms of biological role, catalyzes the NADPH-dependent reduction of glutamyl-tRNA(Glu) to glutamate 1-semialdehyde (GSA). In Sulfurihydrogenibium sp. (strain YO3AOP1), this protein is Glutamyl-tRNA reductase.